We begin with the raw amino-acid sequence, 217 residues long: Lectin ADEL (217 aa).

5 disulfides stabilise this stretch: Cys-5/Cys-187, Cys-42/Cys-68, Cys-61/Cys-77, Cys-114/Cys-135, and Cys-142/Cys-206. Asn-30 carries N-linked (GlcNAc...) asparagine glycosylation. Residues Asn-102 and Asn-126 are each glycosylated (N-linked (GlcNAc...) asparagine).

In terms of assembly, homodimer; disulfide-linked. Post-translationally, contains disulfide bonds.

Its function is as follows. Binds in decreasing order of affinity: galacturonic acid, D-galactosamine, methyl-alpha-D-galactopyranoside and further galactose-containing carbohydrates. Has hemagglutinating activity against human and rabbit erythrocytes. The sequence is that of Lectin ADEL from Aplysia dactylomela (Spotted sea hare).